A 310-amino-acid polypeptide reads, in one-letter code: 4-hydroxyproline 2-epimerase (310 aa).

The active-site Proton acceptor is the Cys-88. Residues 89-90 (GH), His-208, and Asp-232 each bind substrate. Cys-236 acts as the Proton donor in catalysis. Residue 237–238 (GT) participates in substrate binding.

This sequence belongs to the proline racemase family.

The enzyme catalyses trans-4-hydroxy-L-proline = cis-4-hydroxy-D-proline. In terms of biological role, catalyzes the epimerization of trans-4-hydroxy-L-proline (t4LHyp) to cis-4-hydroxy-D-proline (c4DHyp). Is likely involved in a degradation pathway that converts t4LHyp to alpha-ketoglutarate. Displays no proline racemase activity. The sequence is that of 4-hydroxyproline 2-epimerase from Pseudomonas fluorescens (strain ATCC BAA-477 / NRRL B-23932 / Pf-5).